The chain runs to 277 residues: Phosphoribosylaminoimidazole-succinocarboxamide synthase (277 aa).

Belongs to the SAICAR synthetase family.

The enzyme catalyses 5-amino-1-(5-phospho-D-ribosyl)imidazole-4-carboxylate + L-aspartate + ATP = (2S)-2-[5-amino-1-(5-phospho-beta-D-ribosyl)imidazole-4-carboxamido]succinate + ADP + phosphate + 2 H(+). It functions in the pathway purine metabolism; IMP biosynthesis via de novo pathway; 5-amino-1-(5-phospho-D-ribosyl)imidazole-4-carboxamide from 5-amino-1-(5-phospho-D-ribosyl)imidazole-4-carboxylate: step 1/2. The chain is Phosphoribosylaminoimidazole-succinocarboxamide synthase from Salinispora tropica (strain ATCC BAA-916 / DSM 44818 / JCM 13857 / NBRC 105044 / CNB-440).